The chain runs to 111 residues: Repressed By RIM101 protein 1 (111 aa).

The signal sequence occupies residues 1-19 (MKFSTTLLALTASIAAVMS). Positions 71-90 (SGASSATGGSSAAKSGSSSG) are disordered. Serine 81 carries GPI-anchor amidated serine lipidation. The propeptide at 82–111 (AAKSGSSSGAGFAPVAGAGSLAAIAGLLLL) is removed in mature form.

Post-translationally, the GPI-anchor is attached to the protein in the endoplasmic reticulum and serves to target the protein to the cell surface. There, the glucosamine-inositol phospholipid moiety is cleaved off and the GPI-modified mannoprotein is covalently attached via its lipidless GPI glycan remnant to the 1,6-beta-glucan of the outer cell wall layer.

The protein localises to the secreted. It is found in the cell wall. It localises to the membrane. Probable cell wall protein required for filamentation at low pH. This Candida albicans (strain SC5314 / ATCC MYA-2876) (Yeast) protein is Repressed By RIM101 protein 1 (RBR1).